We begin with the raw amino-acid sequence, 484 residues long: RuvB-like helicase 1 (484 aa).

Residues 1–11 (MSMAASSSTAT) show a composition bias toward low complexity. Positions 1-27 (MSMAASSSTATVQPSGIITQPPPPSTL) are disordered. 87-94 (GPPGTGKT) provides a ligand contact to ATP.

Belongs to the RuvB family. May form heterododecamers with RVB2. Component of the SWR1 chromatin remodeling complex, the INO80 chromatin remodeling complex, and of the R2TP complex.

It is found in the nucleus. It catalyses the reaction ATP + H2O = ADP + phosphate + H(+). DNA helicase which participates in several chromatin remodeling complexes, including the SWR1 and the INO80 complexes. The SWR1 complex mediates the ATP-dependent exchange of histone H2A for the H2A variant HZT1 leading to transcriptional regulation of selected genes by chromatin remodeling. The INO80 complex remodels chromatin by shifting nucleosomes and is involved in DNA repair. Also involved in pre-rRNA processing. In Cryptococcus neoformans var. neoformans serotype D (strain B-3501A) (Filobasidiella neoformans), this protein is RuvB-like helicase 1 (RVB1).